The following is a 1322-amino-acid chain: Phosphoribosylformylglycinamidine synthase (1322 aa).

300-311 (GASTGAGGEIRD) is a binding site for ATP. A compositionally biased stretch (polar residues) spans 593–608 (QQTPQRANHTETSPTP). A disordered region spans residues 593 to 613 (QQTPQRANHTETSPTPNTLPP). Residue alanine 702 participates in ATP binding. Positions 703, 742, 746, and 915 each coordinate Mg(2+). ATP is bound at residue serine 917. One can recognise a Glutamine amidotransferase type-1 domain in the interval 1073-1322 (VAILREQGIN…LFRNARAWVG (250 aa)). Residue cysteine 1166 is the Nucleophile of the active site. Active-site residues include histidine 1287 and glutamate 1289.

This sequence in the N-terminal section; belongs to the FGAMS family. As to quaternary structure, monomer.

It localises to the cytoplasm. It carries out the reaction N(2)-formyl-N(1)-(5-phospho-beta-D-ribosyl)glycinamide + L-glutamine + ATP + H2O = 2-formamido-N(1)-(5-O-phospho-beta-D-ribosyl)acetamidine + L-glutamate + ADP + phosphate + H(+). It participates in purine metabolism; IMP biosynthesis via de novo pathway; 5-amino-1-(5-phospho-D-ribosyl)imidazole from N(2)-formyl-N(1)-(5-phospho-D-ribosyl)glycinamide: step 1/2. Its function is as follows. Phosphoribosylformylglycinamidine synthase involved in the purines biosynthetic pathway. Catalyzes the ATP-dependent conversion of formylglycinamide ribonucleotide (FGAR) and glutamine to yield formylglycinamidine ribonucleotide (FGAM) and glutamate. This chain is Phosphoribosylformylglycinamidine synthase, found in Xylella fastidiosa (strain 9a5c).